Consider the following 371-residue polypeptide: Zinc transporter ZIP13 (371 aa).

Over 1-7 (MPGCPCP) the chain is Lumenal. Residues 8–28 (GCGMAGPRLLFLTALALELLE) traverse the membrane as a helical segment. The Cytoplasmic segment spans residues 29 to 68 (RAGGSQPALRSRGTATACRLDNKESESWGALLSGERLDTW). The helical transmembrane segment at 69 to 89 (ICSLLGSLMVGLSGVFPLLVI) threads the bilayer. Residues 90–108 (PLEMGTMLRSEAGAWRLKQ) are Lumenal-facing. A helical transmembrane segment spans residues 109–129 (LLSFALGGLLGNVFLHLLPEA). Residues 130–149 (WAYTCSASPGGEGQSLQQQQ) are Cytoplasmic-facing. A helical transmembrane segment spans residues 150-170 (QLGLWVIAGILTFLALEKMFL). Topologically, residues 171–235 (DSKEEGTSQA…TIDNFTHGLA (65 aa)) are lumenal. Residues 236-256 (VAASFLVSKKIGLLTTMAILL) traverse the membrane as a helical segment. The XEXPHE-motif motif lies at 257–262 (HEIPHE). Residues 257–278 (HEIPHEVGDFAILLRAGFDRWS) are Cytoplasmic-facing. The chain crosses the membrane as a helical span at residues 279–299 (AAKLQLSTALGGLLGAGFAIC). Topologically, residues 300–316 (TQSPKGVVGCSPAAEET) are lumenal. Residues 317–337 (AAWVLPFTSGGFLYIALVNVL) form a helical membrane-spanning segment. Topologically, residues 338 to 349 (PDLLEEEDPWRS) are cytoplasmic. The helical transmembrane segment at 350–370 (LQQLLLLCAGIVVMVLFSLFV) threads the bilayer. Position 371 (D371) is a topological domain, lumenal.

It belongs to the ZIP transporter (TC 2.A.5) family. In terms of assembly, homodimer.

The protein resides in the golgi apparatus membrane. Its subcellular location is the cytoplasmic vesicle membrane. The protein localises to the endoplasmic reticulum membrane. It carries out the reaction Zn(2+)(in) = Zn(2+)(out). Functionally, functions as a zinc transporter transporting Zn(2+) from the Golgi apparatus to the cytosol and thus influences the zinc level at least in areas of the cytosol. May regulate beige adipocyte differentiation. In Homo sapiens (Human), this protein is Zinc transporter ZIP13.